A 294-amino-acid polypeptide reads, in one-letter code: Ribosomal protein L11 methyltransferase (294 aa).

4 residues coordinate S-adenosyl-L-methionine: T144, G165, D187, and N229.

It belongs to the methyltransferase superfamily. PrmA family.

Its subcellular location is the cytoplasm. It catalyses the reaction L-lysyl-[protein] + 3 S-adenosyl-L-methionine = N(6),N(6),N(6)-trimethyl-L-lysyl-[protein] + 3 S-adenosyl-L-homocysteine + 3 H(+). In terms of biological role, methylates ribosomal protein L11. The sequence is that of Ribosomal protein L11 methyltransferase from Pseudomonas paraeruginosa (strain DSM 24068 / PA7) (Pseudomonas aeruginosa (strain PA7)).